The sequence spans 398 residues: ATP-dependent (S)-NAD(P)H-hydrate dehydratase 1 (398 aa).

Residues 80–391 (LLRKAFQMIP…GYIGEAFELV (312 aa)) enclose the YjeF C-terminal domain. (6S)-NADPHX is bound by residues Gly-187 and 240–246 (NHVEFQR). Residues 280 to 284 (KGSID) and 300 to 309 (GSPKRCGGQG) each bind ATP. A (6S)-NADPHX-binding site is contributed by Asp-310.

It belongs to the NnrD/CARKD family. Mg(2+) is required as a cofactor.

Its subcellular location is the cytoplasm. It catalyses the reaction (6S)-NADHX + ATP = ADP + phosphate + NADH + H(+). The enzyme catalyses (6S)-NADPHX + ATP = ADP + phosphate + NADPH + H(+). Its function is as follows. Catalyzes the dehydration of the S-form of NAD(P)HX at the expense of ATP, which is converted to ADP. Together with NAD(P)HX epimerase, which catalyzes the epimerization of the S- and R-forms, the enzyme allows the repair of both epimers of NAD(P)HX, a damaged form of NAD(P)H that is a result of enzymatic or heat-dependent hydration. This is ATP-dependent (S)-NAD(P)H-hydrate dehydratase 1 from Puccinia graminis f. sp. tritici (strain CRL 75-36-700-3 / race SCCL) (Black stem rust fungus).